Reading from the N-terminus, the 187-residue chain is Acireductone dioxygenase (187 aa).

Positions 90, 92, 96, and 135 each coordinate Fe(2+). 4 residues coordinate Ni(2+): His-90, His-92, Glu-96, and His-135.

It belongs to the acireductone dioxygenase (ARD) family. Fe(2+) is required as a cofactor. It depends on Ni(2+) as a cofactor.

It localises to the cytoplasm. The protein resides in the nucleus. It catalyses the reaction 1,2-dihydroxy-5-(methylsulfanyl)pent-1-en-3-one + O2 = 4-methylsulfanyl-2-oxobutanoate + formate + 2 H(+). The enzyme catalyses 1,2-dihydroxy-5-(methylsulfanyl)pent-1-en-3-one + O2 = 3-(methylsulfanyl)propanoate + CO + formate + 2 H(+). The protein operates within amino-acid biosynthesis; L-methionine biosynthesis via salvage pathway; L-methionine from S-methyl-5-thio-alpha-D-ribose 1-phosphate: step 5/6. In terms of biological role, catalyzes 2 different reactions between oxygen and the acireductone 1,2-dihydroxy-3-keto-5-methylthiopentene (DHK-MTPene) depending upon the metal bound in the active site. Fe-containing acireductone dioxygenase (Fe-ARD) produces formate and 2-keto-4-methylthiobutyrate (KMTB), the alpha-ketoacid precursor of methionine in the methionine recycle pathway. Ni-containing acireductone dioxygenase (Ni-ARD) produces methylthiopropionate, carbon monoxide and formate, and does not lie on the methionine recycle pathway. The protein is Acireductone dioxygenase of Drosophila pseudoobscura pseudoobscura (Fruit fly).